The following is a 1047-amino-acid chain: Ubiquitin carboxyl-terminal hydrolase 48 (1047 aa).

The USP domain maps to 89–416; the sequence is VGLTNLGATC…NAYMLVYKQQ (328 aa). The Nucleophile role is filled by Cys98. Catalysis depends on His348, which acts as the Proton acceptor. DUSP domains follow at residues 457–551, 567–697, and 717–830; these read QSVD…RSSL, NQLN…DHDP, and MMAN…RIHD. Positions 609–647 are disordered; sequence LEEDEEETKHNNSKINGEKSSPGTKADGVKGDSEDGDGE. A compositionally biased stretch (polar residues) spans 621-631; sequence SKINGEKSSPG. Positions 635-647 are enriched in basic and acidic residues; the sequence is DGVKGDSEDGDGE. Residues 887–928 are disordered; the sequence is PEFSVSGSDVEDEKEEPKLDGEKDPDFSQTEGGAKRQKLNDT. A compositionally biased stretch (basic and acidic residues) spans 901-912; it reads EEPKLDGEKDPD. The Ubiquitin-like domain maps to 961–1012; that stretch reads VSANQTLKDLKIQIMHAFSVAPFDQNLSIDGRCLKDDSATLGSLGVIPESII.

It belongs to the peptidase C19 family.

It is found in the cytoplasm. The protein resides in the nucleus. It carries out the reaction Thiol-dependent hydrolysis of ester, thioester, amide, peptide and isopeptide bonds formed by the C-terminal Gly of ubiquitin (a 76-residue protein attached to proteins as an intracellular targeting signal).. In terms of biological role, recognizes and hydrolyzes the peptide bond at the C-terminal Gly of ubiquitin. Involved in the processing of poly-ubiquitin precursors as well as that of ubiquitinated proteins. This Danio rerio (Zebrafish) protein is Ubiquitin carboxyl-terminal hydrolase 48 (usp48).